Consider the following 125-residue polypeptide: Large ribosomal subunit protein bL12 (125 aa).

It belongs to the bacterial ribosomal protein bL12 family. In terms of assembly, homodimer. Part of the ribosomal stalk of the 50S ribosomal subunit. Forms a multimeric L10(L12)X complex, where L10 forms an elongated spine to which 2 to 4 L12 dimers bind in a sequential fashion. Binds GTP-bound translation factors.

Its function is as follows. Forms part of the ribosomal stalk which helps the ribosome interact with GTP-bound translation factors. Is thus essential for accurate translation. This Rhizobium leguminosarum bv. trifolii (strain WSM2304) protein is Large ribosomal subunit protein bL12.